The sequence spans 248 residues: Transcription termination/antitermination protein NusG (248 aa).

A KOW domain is found at 197-227; it reads KGDQVRVIEGPFMNFTGTVEEVHPEKRKLTV.

Belongs to the NusG family. In terms of assembly, monomer. Homodimer.

Functionally, participates in transcription elongation, termination and antitermination. The chain is Transcription termination/antitermination protein NusG from Aquifex aeolicus (strain VF5).